Reading from the N-terminus, the 4691-residue chain is Plectin (4691 aa).

Residues 1–1478 (MVAGMLMPLD…SELTTLTSQY (1478 aa)) are globular 1. Position 21 is a phosphoserine (Arg-21). Val-26 bears the Phosphotyrosine mark. 2 disordered regions span residues 113-161 (RSPH…TPVV) and 167-186 (GTLARPGPEPAPATDERDRV). Positions 137–154 (DPAREERQVYRRKEREEG) are enriched in basic and acidic residues. The interval 181–411 (DERDRVQKKT…YVSSLYDAMP (231 aa)) is actin-binding. 2 Calponin-homology (CH) domains span residues 185-293 (RVQK…LHFQ) and 306-411 (MTAK…DAMP). The stretch at 653–727 (LQSTQRRPEL…ERARNDESQL (75 aa)) is one Spectrin 1 repeat. Ser-728 carries the phosphoserine modification. Spectrin repeat units follow at residues 748 to 832 (KLLN…REDH) and 845 to 938 (LQTQ…AIVQ). A Phosphothreonine modification is found at Thr-823. The SH3 domain maps to 949 to 1006 (RGHVPLIAVCDYKQVEVTVHKGDQCQLVGPAQPSHWKVLSGSSSEAAVPSVCFLVPPP). Residues 963-4572 (VEVTVHKGDQ…ARTAQKLRDV (3610 aa)) are required for interaction with intermediate filament proteins. At Ser-1055 the chain carries Phosphoserine. One copy of the Spectrin 4 repeat lies at 1323 to 1423 (RERVTQLLER…QKFAKQYINA (101 aa)). Ser-1443 carries the post-translational modification Phosphoserine. Coiled coils occupy residues 1477-1697 (QYIK…ERRL) and 1729-2764 (SFAE…TTQA). The segment at 1479-2762 (IKFISETLRR…ALAHSEIATT (1284 aa)) is central fibrous rod domain. A disordered region spans residues 1626-1653 (RAEEAEAQKRQAQEEAERLRRQVQDESQ). Position 1729 is a phosphoserine (Ser-1729). Position 1733 is an N6-acetyllysine (Lys-1733). Disordered regions lie at residues 1801–1835 (SLAQADAEKQKEEAEREARRRGKAEEQAVRQRELA), 2100–2141 (AEDT…SLAA), and 2223–2317 (RLRS…KHKK). Composition is skewed to basic and acidic residues over residues 1806–1835 (DAEKQKEEAEREARRRGKAEEQAVRQRELA), 2100–2116 (AEDTMRSKEQAELEAAR), 2124–2136 (EEQRRREAEERVQ), and 2223–2266 (RLRS…KQSA). A compositionally biased stretch (low complexity) spans 2267–2280 (EEQAQAQAQAQAAA). Positions 2281-2296 (EKLRKEAEQEAARRAQ) are enriched in basic and acidic residues. Ser-2639 bears the Phosphoserine mark. An N6-acetyllysine modification is found at Lys-2644. The tract at residues 2675-2728 (LREEQQRQQQQMEQEKQELMASMEEARRRQREAEEGVRRKQEELQHLEQQRQQQ) is disordered. The segment covering 2687–2728 (EQEKQELMASMEEARRRQREAEEGVRRKQEELQHLEQQRQQQ) has biased composition (basic and acidic residues). The segment at 2763-4691 (QAASTKALPN…SLGGPESAVA (1929 aa)) is globular 2. A Phosphoserine modification is found at Ser-2781. Tyr-2788 carries the phosphotyrosine modification. 6 Plectin repeats span residues 2795–2832 (QKVPAQQLQEAGILSQEELQRLAQGHTTVAELTQREDV), 2833–2870 (YRYLKGRSSIAGLLLKPTNEKLSVYTALQRQLLSPGTA), 2871–2908 (LILLEAQAASGFLLDPVRNRRLTVNEAVKEGVVGPELH), 2909–2946 (HKLLSAERAVTGYKDPYTGEQISLFQAMKKDLIVRDHG), 2947–2984 (VRLLEAQIATGGIIDPVHSHRVPVDVAYKRGYFDEEMN), and 2988–3022 (SDPSDDTKGFFDPNTHENLTYLQLLERCVEDPETG). At Ser-2809 the chain carries Phosphoserine. Position 2893 is a phosphothreonine (Thr-2893). The residue at position 3040 (Tyr-3040) is a Phosphotyrosine. N6-acetyllysine is present on residues Lys-3060 and Lys-3098. 6 Plectin repeats span residues 3123 to 3160 (ALVPAAELLDSGVISHELYQQLQRGERSVREVAEADSV), 3161 to 3198 (RQALRGTNVIAGVWLEEAGQKLSIYEALKKDLLQPEVA), 3199 to 3236 (VALLEAQAGTGHIIDPATSARLTVDEAVRAGLVGPELH), 3237 to 3274 (EKLLSAEKAVTGYRDPYSGQSVSLFQALKKGLIPREQG), 3275 to 3312 (LRLLDAQLSTGGIVDPSKSHRVPLDVAYARGYLDKETN), and 3315 to 3350 (LTSPRDDARVYHDPSTQEPVTYSQLQQRCRSDQLTG). Over residues 3312-3326 (NRALTSPRDDARVYH) the composition is skewed to basic and acidic residues. Residues 3312–3338 (NRALTSPRDDARVYHDPSTQEPVTYSQ) form a disordered region. Polar residues predominate over residues 3328–3338 (PSTQEPVTYSQ). Tyr-3369 carries the post-translational modification Phosphotyrosine. Lys-3427 carries the post-translational modification N6-acetyllysine. Plectin repeat units lie at residues 3492–3529 (RTLLQGSGCLAGIYLEDSKEKVTIYEAMRRGLLRPSTA), 3530–3567 (TLLLEAQAATGFLVDPVRNQRLYVHEAVKAGVVGPELH), 3568–3605 (EKLLSAEKAVTGYKDPYSGNTISLFQAMKKGLVLRDHA), 3606–3643 (IRLLEAQVATGGIIDPVHSHRLPVDVAYQRGYFDEEMN), and 3647–3681 (ADPSDDTKGFFDPNTHENLTYLQLLERCVEDPETG). Thr-3792 carries the post-translational modification Phosphothreonine. Tyr-3797 carries the phosphotyrosine modification. Plectin repeat units lie at residues 3827–3864 (WRYLYGTGAVAGVYLPGSRQTLTIYQALKKGLLSAEVA), 3865–3902 (RLLLEAQAATGFLLDPVKGERLTVDEAVRKGLVGPELH), 3903–3940 (DRLLSAERAVTGYRDPYTEQTISLFQAMKKELIPAEEA), 3941–3978 (LRLLDAQLATGGIVDPRLGFHLPLEVAYQRGYLNKDTH), and 3982–4015 (SEPSEVRSYVDPSTDERLSYTQLLKRCRRDDPSG). The required for interaction with type2 keratins, DES and VIM stretch occupies residues 3954 to 4291 (VDPRLGFHLP…KRRVVIVDPE (338 aa)). At Thr-4037 the chain carries Phosphothreonine. The residue at position 4061 (Ser-4061) is a Phosphoserine. 6 Plectin repeats span residues 4070-4107 (QKFLEGTSCIAGVFVDATKERLSVYQAMKKGIIRPGTA), 4108-4145 (FELLEAQAATGYVIDPIKGLKLTVEEAVRMGIVGPEFK), 4146-4183 (DKLLSAERAVTGYKDPYSGKLISLFQAMKKGLILKDHG), 4184-4221 (IRLLEAQIATGGIIDPEESHRLPVEVAYKRGLFDEEMN), 4225-4259 (TDPSDDTKGFFDPNTEENLTYLQLMERCITDPQTG), and 4272-4312 (RKTS…HQTY). The segment at 4257–4307 (QTGLCLLPLKEKKRERKTSSKSSVRKRRVVIVDPETGKEMSVYEAYRKGLI) is binding to intermediate filaments. The interval 4387-4420 (FRSRSSSVGSSSSYPISSAGPRTQLASWSDPTEE) is disordered. Phosphoserine is present on residues Ser-4389, Ser-4391, Ser-4392, Ser-4393, Ser-4396, Ser-4397, Ser-4398, and Ser-4399. A compositionally biased stretch (low complexity) spans 4389-4404 (SRSSSVGSSSSYPISS). Residue Tyr-4400 is modified to Phosphotyrosine. Residues Ser-4403 and Ser-4413 each carry the phosphoserine modification. Residues 4406-4416 (GPRTQLASWSD) are compositionally biased toward polar residues. 5 Plectin repeats span residues 4415-4452 (SDPTEETGPVAGILDTETLEKVSITEAMHRNLVDNITG), 4453-4490 (QRLLEAQACTGGIIDPSTGERFPVTEAVNKGLVDKIMV), 4491-4528 (DRINLAQKAFCGFEDPRTKTKMSAAQALKKGWLYYEAG), 4529-4566 (QRFLEVQYLTGGLIEPDTPGRVSLDEALQRGTVDARTA), and 4567-4604 (QKLRDVSAYSKYLTCPKTKLKISYKDALDRSMVEEGTG). A Phosphothreonine modification is found at Thr-4418. A required for efficient interaction with KRT5 and KRT14 heterodimers region spans residues 4503–4572 (FEDPRTKTKM…ARTAQKLRDV (70 aa)). A Phosphothreonine; by CDK1 modification is found at Thr-4546. Phosphoserine is present on residues Ser-4614 and Ser-4620. Low complexity predominate over residues 4618–4678 (YYSPYSVSGS…SGYGRRYASG (61 aa)). Positions 4618–4691 (YYSPYSVSGS…SLGGPESAVA (74 aa)) are disordered. The residue at position 4622 (Tyr-4622) is a Phosphotyrosine. 3 positions are modified to phosphoserine: Ser-4623, Ser-4625, and Ser-4629. Phosphothreonine is present on Thr-4630. A 4 X 4 AA tandem repeats of G-S-R-X region spans residues 4632-4647 (GSRTGSRTGSRAGSRR). Position 4633 is a phosphoserine (Ser-4633). 2 positions are modified to omega-N-methylarginine: Arg-4634 and Arg-4647. 2 positions are modified to phosphoserine: Ser-4649 and Ser-4682.

Belongs to the plakin or cytolinker family. As to quaternary structure, homodimer or homotetramer. Interacts (via actin-binding domain) with SYNE3. Interacts (via calponin-homology (CH) 1 domain) with VIM (via rod region). Interacts (via N-terminus) with DST isoform 2 (via N-terminus). Interacts with FER. Interacts with TOR1A. Interacts with ANK3. Identified in complexes that contain VIM, EZR, AHNAK, BFSP1, BFSP2, ANK2, PLEC, PRX and spectrin. In terms of assembly, interacts with KRT14, heterodimers consisting of KRT8 and KRT18, heterodimers consisting of KRT5 and KRT14, heterodimers consisting of KRT14 and KRT15, and heterodimers consisting of KRT1 and KRT10. Interacts with DES and VIM. In terms of processing, phosphorylated by CDK1; regulates dissociation from intermediate filaments during mitosis. Isoform PLEC-1A is phosphorylated on Ser-21. Isoform PLEC-1A is phosphorylated on Tyr-26. As to expression, detected in eye lens fiber cells (at protein level). Expressed at high levels in lung, brain, small intestine, muscle, heart and skin with lower levels found in kidney, liver, uterus, spleen and salivary gland.

It is found in the cytoplasm. The protein resides in the cytoskeleton. Its subcellular location is the cell junction. The protein localises to the hemidesmosome. It localises to the cell projection. It is found in the podosome. In terms of biological role, interlinks intermediate filaments with microtubules and microfilaments and anchors intermediate filaments to desmosomes or hemidesmosomes. May be involved not only in the cross-linking and stabilization of cytoskeletal intermediate filaments network, but also in the regulation of their dynamics. The sequence is that of Plectin (Plec) from Mus musculus (Mouse).